Consider the following 154-residue polypeptide: Myoglobin (154 aa).

Positions 2–148 (GLSDGEWQLV…FRNDIAAKYK (147 aa)) constitute a Globin domain. Phosphoserine is present on S4. H65 provides a ligand contact to nitrite. Residue H65 participates in O2 binding. At T68 the chain carries Phosphothreonine. Heme b is bound at residue H94.

As to quaternary structure, monomer.

The protein resides in the cytoplasm. It localises to the sarcoplasm. The catalysed reaction is Fe(III)-heme b-[protein] + nitric oxide + H2O = Fe(II)-heme b-[protein] + nitrite + 2 H(+). It carries out the reaction H2O2 + AH2 = A + 2 H2O. Monomeric heme protein which primary function is to store oxygen and facilitate its diffusion within muscle tissues. Reversibly binds oxygen through a pentacoordinated heme iron and enables its timely and efficient release as needed during periods of heightened demand. Depending on the oxidative conditions of tissues and cells, and in addition to its ability to bind oxygen, it also has a nitrite reductase activity whereby it regulates the production of bioactive nitric oxide. Under stress conditions, like hypoxia and anoxia, it also protects cells against reactive oxygen species thanks to its pseudoperoxidase activity. This chain is Myoglobin, found in Hystrix cristata (North African crested porcupine).